Reading from the N-terminus, the 543-residue chain is Formin-binding protein 1-like (543 aa).

One can recognise an F-BAR domain in the interval 1-263 (MSWGTELWDQ…AAKSVDERRD (263 aa)). Coiled-coil stretches lie at residues 66–258 (FTSC…AKSV) and 334–426 (LEDF…QRSE). One can recognise an REM-1 domain in the interval 339 to 416 (HLPPEQRRKR…IHKNEGWLSE (78 aa)). A disordered region spans residues 424 to 467 (RSERRHSAEANHLVAQGRESPEGSYTEDANQEGRVQPQHHAHPE). The 62-residue stretch at 479–540 (PAIGHCKSLY…PTSYIEITLE (62 aa)) folds into the SH3 domain.

This sequence belongs to the FNBP1 family. In terms of assembly, homodimerizes, the dimers can polymerize end-to-end to form filamentous structures. Interacts with GTP-bound cdc42 and wasl/n-wasp.

Its subcellular location is the cytoplasm. The protein resides in the cytoskeleton. The protein localises to the cell cortex. It is found in the cytoplasmic vesicle. It localises to the cell membrane. Functionally, required to coordinate membrane tubulation with reorganization of the actin cytoskeleton during endocytosis. Essential for autophagy of intracellular bacterial pathogens. Promotes cdc42-induced actin polymerization by activating the wasl-waspip complex, the predominant form of wasl/n-wasp in cells. The sequence is that of Formin-binding protein 1-like (fnbp1l) from Xenopus laevis (African clawed frog).